The primary structure comprises 469 residues: Phosphoenolpyruvate carboxylase (469 aa).

This sequence belongs to the PEPCase type 2 family. In terms of assembly, homotetramer. It depends on Mg(2+) as a cofactor.

It catalyses the reaction oxaloacetate + phosphate = phosphoenolpyruvate + hydrogencarbonate. In terms of biological role, catalyzes the irreversible beta-carboxylation of phosphoenolpyruvate (PEP) to form oxaloacetate (OAA), a four-carbon dicarboxylic acid source for the tricarboxylic acid cycle. The sequence is that of Phosphoenolpyruvate carboxylase from Pyrococcus abyssi (strain GE5 / Orsay).